We begin with the raw amino-acid sequence, 121 residues long: Large ribosomal subunit protein bL20 (121 aa).

It belongs to the bacterial ribosomal protein bL20 family.

Functionally, binds directly to 23S ribosomal RNA and is necessary for the in vitro assembly process of the 50S ribosomal subunit. It is not involved in the protein synthesizing functions of that subunit. This is Large ribosomal subunit protein bL20 from Orientia tsutsugamushi (strain Ikeda) (Rickettsia tsutsugamushi).